A 312-amino-acid polypeptide reads, in one-letter code: 4-hydroxy-3-methylbut-2-enyl diphosphate reductase (312 aa).

Residue C15 coordinates [4Fe-4S] cluster. Residues H44 and H77 each contribute to the (2E)-4-hydroxy-3-methylbut-2-enyl diphosphate site. The dimethylallyl diphosphate site is built by H44 and H77. H44 and H77 together coordinate isopentenyl diphosphate. Residue C99 coordinates [4Fe-4S] cluster. (2E)-4-hydroxy-3-methylbut-2-enyl diphosphate is bound at residue H127. Dimethylallyl diphosphate is bound at residue H127. An isopentenyl diphosphate-binding site is contributed by H127. The active-site Proton donor is the E129. Residue T167 participates in (2E)-4-hydroxy-3-methylbut-2-enyl diphosphate binding. Residue C197 participates in [4Fe-4S] cluster binding. S225, S226, N227, and S269 together coordinate (2E)-4-hydroxy-3-methylbut-2-enyl diphosphate. Dimethylallyl diphosphate-binding residues include S225, S226, N227, and S269. 4 residues coordinate isopentenyl diphosphate: S225, S226, N227, and S269.

The protein belongs to the IspH family. [4Fe-4S] cluster is required as a cofactor.

The catalysed reaction is isopentenyl diphosphate + 2 oxidized [2Fe-2S]-[ferredoxin] + H2O = (2E)-4-hydroxy-3-methylbut-2-enyl diphosphate + 2 reduced [2Fe-2S]-[ferredoxin] + 2 H(+). The enzyme catalyses dimethylallyl diphosphate + 2 oxidized [2Fe-2S]-[ferredoxin] + H2O = (2E)-4-hydroxy-3-methylbut-2-enyl diphosphate + 2 reduced [2Fe-2S]-[ferredoxin] + 2 H(+). It participates in isoprenoid biosynthesis; dimethylallyl diphosphate biosynthesis; dimethylallyl diphosphate from (2E)-4-hydroxy-3-methylbutenyl diphosphate: step 1/1. Its pathway is isoprenoid biosynthesis; isopentenyl diphosphate biosynthesis via DXP pathway; isopentenyl diphosphate from 1-deoxy-D-xylulose 5-phosphate: step 6/6. Catalyzes the conversion of 1-hydroxy-2-methyl-2-(E)-butenyl 4-diphosphate (HMBPP) into a mixture of isopentenyl diphosphate (IPP) and dimethylallyl diphosphate (DMAPP). Acts in the terminal step of the DOXP/MEP pathway for isoprenoid precursor biosynthesis. The protein is 4-hydroxy-3-methylbut-2-enyl diphosphate reductase of Azoarcus sp. (strain BH72).